The primary structure comprises 524 residues: Hydroxysteroid dehydrogenase-like protein 2 (524 aa).

NADP(+) contacts are provided by residues 17–23 (GASRGIG), Lys-42, and Asp-74. Lys-42 is modified (N6-(2-hydroxyisobutyryl)lysine). Lys-116 bears the N6-acetyllysine mark. Residue Tyr-168 is the Proton acceptor of the active site. An NADP(+)-binding site is contributed by Lys-172. The span at 283–300 (EEKESYDPVPEVKEEKLQ) shows a compositional bias: basic and acidic residues. Residues 283-410 (EEKESYDPVP…PLLQSVLPPK (128 aa)) form a disordered region. Low complexity predominate over residues 301-391 (LQEQPQLQEQ…QQQPQQRPQQ (91 aa)). The 108-residue stretch at 414-521 (GAVEETFRIV…KLEKLMTHMN (108 aa)) folds into the SCP2 domain. Position 424 is an N6-succinyllysine (Lys-424).

This sequence belongs to the short-chain dehydrogenases/reductases (SDR) family.

It is found in the peroxisome. The protein localises to the mitochondrion. In terms of biological role, has apparently no steroid dehydrogenase activity. Controls bile acid (BA) and lipid metabolism in response to nutritional cues. The chain is Hydroxysteroid dehydrogenase-like protein 2 (Hsdl2) from Rattus norvegicus (Rat).